A 642-amino-acid chain; its full sequence is Chaperone protein DnaK (642 aa).

Residue Thr200 is modified to Phosphothreonine; by autocatalysis. Residues 608-618 show a composition bias toward low complexity; that stretch reads QAESQAAGEGQ. Residues 608 to 642 form a disordered region; sequence QAESQAAGEGQPDAGKKDDGNVVDAEFEEVKKDKQ.

The protein belongs to the heat shock protein 70 family.

Its function is as follows. Acts as a chaperone. This Laribacter hongkongensis (strain HLHK9) protein is Chaperone protein DnaK.